The sequence spans 180 residues: Transcription repressor NadR (180 aa).

Homodimer.

In terms of biological role, in the presence of nicotinic acid represses transcription of the nadBCA and nifS-nadR operons. Also binds to DNA upstream of the niaP gene, probably regulating it as well. May bind nicotinic acid. The chain is Transcription repressor NadR (nadR) from Bacillus subtilis (strain 168).